The sequence spans 522 residues: Apolipoprotein N-acyltransferase (522 aa).

Transmembrane regions (helical) follow at residues 17–37 (YFTY…FSPF), 61–81 (TALL…VSWL), 98–118 (FLVG…TYLV), 127–147 (VIFA…FTGF), 164–184 (IAPI…SAVI), and 197–217 (LKLV…SAYS). Positions 236–483 (AQGNIEQNLK…ETTLTYKIAP (248 aa)) constitute a CN hydrolase domain. The active-site Proton acceptor is the Glu276. Residue Lys342 is part of the active site. Cys394 serves as the catalytic Nucleophile. Residues 495–515 (NMPLYALSLLFLLLHSMMAFI) traverse the membrane as a helical segment.

Belongs to the CN hydrolase family. Apolipoprotein N-acyltransferase subfamily.

Its subcellular location is the cell inner membrane. The enzyme catalyses N-terminal S-1,2-diacyl-sn-glyceryl-L-cysteinyl-[lipoprotein] + a glycerophospholipid = N-acyl-S-1,2-diacyl-sn-glyceryl-L-cysteinyl-[lipoprotein] + a 2-acyl-sn-glycero-3-phospholipid + H(+). It functions in the pathway protein modification; lipoprotein biosynthesis (N-acyl transfer). Functionally, catalyzes the phospholipid dependent N-acylation of the N-terminal cysteine of apolipoprotein, the last step in lipoprotein maturation. This is Apolipoprotein N-acyltransferase from Haemophilus influenzae (strain ATCC 51907 / DSM 11121 / KW20 / Rd).